A 153-amino-acid chain; its full sequence is Cytochrome c-type biogenesis protein CcmE (153 aa).

The Cytoplasmic portion of the chain corresponds to 1 to 6 (MNARRR). The chain crosses the membrane as a helical; Signal-anchor for type II membrane protein span at residues 7 to 27 (LWSVLMLILAVGTAATLTIMA). Residues 28–153 (LRHNLTYLYM…LDTPIAETTP (126 aa)) lie on the Periplasmic side of the membrane. Positions 121 and 125 each coordinate heme. Residues 131 to 141 (ANKMQPTPTQH) show a composition bias toward polar residues. The segment at 131–153 (ANKMQPTPTQHTHLDTPIAETTP) is disordered.

It belongs to the CcmE/CycJ family.

The protein localises to the cell inner membrane. In terms of biological role, heme chaperone required for the biogenesis of c-type cytochromes. Transiently binds heme delivered by CcmC and transfers the heme to apo-cytochromes in a process facilitated by CcmF and CcmH. This Xylella fastidiosa (strain Temecula1 / ATCC 700964) protein is Cytochrome c-type biogenesis protein CcmE.